The sequence spans 530 residues: Fusaric acid resistance protein FusA (530 aa).

An N-terminal signal peptide occupies residues 1–23 (MQSPATKGTLALAVLAVSLIMAG). Cys-24 carries the N-palmitoyl cysteine lipid modification. The S-diacylglycerol cysteine moiety is linked to residue Cys-24. 2 disordered regions span residues 375–442 (NAGV…RQRA) and 476–530 (GVET…PAAR). Low complexity-rich tracts occupy residues 421 to 430 (RPQLPAVARR) and 494 to 530 (AAGA…PAAR).

It belongs to the outer membrane factor (OMF) (TC 1.B.17) family.

The protein resides in the cell membrane. Its function is as follows. Involved in the resistance (detoxification) of the fungal toxin fusaric acid. This chain is Fusaric acid resistance protein FusA (fusA), found in Burkholderia cepacia (Pseudomonas cepacia).